A 278-amino-acid chain; its full sequence is Elongation factor Ts (278 aa).

Residues 80–83 form an involved in Mg(2+) ion dislocation from EF-Tu region; that stretch reads TDFV.

It belongs to the EF-Ts family.

The protein resides in the cytoplasm. Functionally, associates with the EF-Tu.GDP complex and induces the exchange of GDP to GTP. It remains bound to the aminoacyl-tRNA.EF-Tu.GTP complex up to the GTP hydrolysis stage on the ribosome. This chain is Elongation factor Ts, found in Micrococcus luteus (strain ATCC 4698 / DSM 20030 / JCM 1464 / CCM 169 / CCUG 5858 / IAM 1056 / NBRC 3333 / NCIMB 9278 / NCTC 2665 / VKM Ac-2230) (Micrococcus lysodeikticus).